A 342-amino-acid polypeptide reads, in one-letter code: Tetraacyldisaccharide 4'-kinase (342 aa).

68–75 (TVGGTGKT) contacts ATP.

Belongs to the LpxK family.

The enzyme catalyses a lipid A disaccharide + ATP = a lipid IVA + ADP + H(+). The protein operates within glycolipid biosynthesis; lipid IV(A) biosynthesis; lipid IV(A) from (3R)-3-hydroxytetradecanoyl-[acyl-carrier-protein] and UDP-N-acetyl-alpha-D-glucosamine: step 6/6. In terms of biological role, transfers the gamma-phosphate of ATP to the 4'-position of a tetraacyldisaccharide 1-phosphate intermediate (termed DS-1-P) to form tetraacyldisaccharide 1,4'-bis-phosphate (lipid IVA). This Burkholderia cenocepacia (strain ATCC BAA-245 / DSM 16553 / LMG 16656 / NCTC 13227 / J2315 / CF5610) (Burkholderia cepacia (strain J2315)) protein is Tetraacyldisaccharide 4'-kinase.